The primary structure comprises 194 residues: Imidazoleglycerol-phosphate dehydratase (194 aa).

It belongs to the imidazoleglycerol-phosphate dehydratase family.

It is found in the cytoplasm. It carries out the reaction D-erythro-1-(imidazol-4-yl)glycerol 3-phosphate = 3-(imidazol-4-yl)-2-oxopropyl phosphate + H2O. It participates in amino-acid biosynthesis; L-histidine biosynthesis; L-histidine from 5-phospho-alpha-D-ribose 1-diphosphate: step 6/9. The chain is Imidazoleglycerol-phosphate dehydratase from Chloroherpeton thalassium (strain ATCC 35110 / GB-78).